A 460-amino-acid polypeptide reads, in one-letter code: Cyclin-A1-1 (460 aa).

Disordered stretches follow at residues 1-52 (MSNI…ITNQ) and 95-126 (PHKVASSPSKSDDGSVSMDETRSSSDSYKSPQ). 2 stretches are compositionally biased toward low complexity: residues 10–19 (SSFSSSTKSS) and 100–111 (SSPSKSDDGSVS).

Belongs to the cyclin family. Cyclin AB subfamily. Interacts with FZR2/CCS52A1, FZR1/CCS52A2 and FZR3/CCS52B.

This Arabidopsis thaliana (Mouse-ear cress) protein is Cyclin-A1-1 (CYCA1-1).